A 138-amino-acid polypeptide reads, in one-letter code: Thyrotropin subunit beta (138 aa).

The first 20 residues, 1–20 (MTATFLMSMIFGLACGQAMS), serve as a signal peptide directing secretion. 6 cysteine pairs are disulfide-bonded: cysteine 22/cysteine 72, cysteine 36/cysteine 87, cysteine 39/cysteine 125, cysteine 47/cysteine 103, cysteine 51/cysteine 105, and cysteine 108/cysteine 115. A glycan (N-linked (GlcNAc...) asparagine) is linked at asparagine 43. Residues 133–138 (MVGFSI) constitute a propeptide that is removed on maturation.

It belongs to the glycoprotein hormones subunit beta family. In terms of assembly, heterodimer of a common alpha chain and a unique beta chain which confers biological specificity to thyrotropin, lutropin, follitropin and gonadotropin.

The protein resides in the secreted. Functionally, indispensable for the control of thyroid structure and metabolism. This is Thyrotropin subunit beta (TSHB) from Bos taurus (Bovine).